The following is a 324-amino-acid chain: Fibronectin type III domain-containing protein 8 (324 aa).

Positions 179–280 (PDTPFIFEHT…KPYKFATLAT (102 aa)) constitute a Fibronectin type-III domain.

The sequence is that of Fibronectin type III domain-containing protein 8 (FNDC8) from Homo sapiens (Human).